A 486-amino-acid polypeptide reads, in one-letter code: Glycogen synthase (486 aa).

K15 lines the ADP-alpha-D-glucose pocket.

Belongs to the glycosyltransferase 1 family. Bacterial/plant glycogen synthase subfamily.

It carries out the reaction [(1-&gt;4)-alpha-D-glucosyl](n) + ADP-alpha-D-glucose = [(1-&gt;4)-alpha-D-glucosyl](n+1) + ADP + H(+). It participates in glycan biosynthesis; glycogen biosynthesis. Its function is as follows. Synthesizes alpha-1,4-glucan chains using ADP-glucose. The chain is Glycogen synthase from Thermotoga petrophila (strain ATCC BAA-488 / DSM 13995 / JCM 10881 / RKU-1).